The following is a 122-amino-acid chain: Large ribosomal subunit protein bL19 (122 aa).

Belongs to the bacterial ribosomal protein bL19 family.

Functionally, this protein is located at the 30S-50S ribosomal subunit interface and may play a role in the structure and function of the aminoacyl-tRNA binding site. This chain is Large ribosomal subunit protein bL19, found in Novosphingobium aromaticivorans (strain ATCC 700278 / DSM 12444 / CCUG 56034 / CIP 105152 / NBRC 16084 / F199).